The chain runs to 228 residues: Protein N-lysine methyltransferase METTL21D (228 aa).

N-acetylalanine is present on Ala-2. S-adenosyl-L-methionine is bound by residues Trp-43, 75-77 (GSG), Asp-96, Trp-126, Ala-142, and Tyr-147.

Belongs to the methyltransferase superfamily. METTL21 family. In terms of assembly, interacts with ALKBH6. Interacts with ASPSCR1 and UBXN6; interaction with ASPSCR1, but not with UBXN6, enhances VCP methylation. Widely expressed.

It localises to the cytoplasm. It catalyses the reaction L-lysyl-[protein] + 3 S-adenosyl-L-methionine = N(6),N(6),N(6)-trimethyl-L-lysyl-[protein] + 3 S-adenosyl-L-homocysteine + 3 H(+). Its function is as follows. Protein N-lysine methyltransferase that specifically trimethylates 'Lys-315' of VCP/p97; this modification may decrease VCP ATPase activity. In Mus musculus (Mouse), this protein is Protein N-lysine methyltransferase METTL21D (Vcpkmt).